A 760-amino-acid chain; its full sequence is Prolyl endopeptidase FAP (760 aa).

Topologically, residues 1–4 are cytoplasmic; it reads MKTW. A helical; Signal-anchor for type II membrane protein transmembrane segment spans residues 5-25; the sequence is VKIVFGVATSAVLALLVMCIV. The Extracellular portion of the chain corresponds to 26–760; the sequence is LRPSRVHNSE…FLKQCFSLSD (735 aa). Residues asparagine 49, asparagine 92, and asparagine 99 are each glycosylated (N-linked (GlcNAc...) asparagine). Substrate contacts are provided by glutamate 203 and glutamate 204. Asparagine 227 and asparagine 314 each carry an N-linked (GlcNAc...) asparagine glycan. 3 cysteine pairs are disulfide-bonded: cysteine 321–cysteine 332, cysteine 438–cysteine 441, and cysteine 448–cysteine 466. Serine 624 (charge relay system) is an active-site residue. Cysteine 643 and cysteine 755 are oxidised to a cystine. An N-linked (GlcNAc...) asparagine glycan is attached at asparagine 679. Active-site charge relay system residues include aspartate 702 and histidine 734.

It belongs to the peptidase S9B family. Homodimer; homodimerization is required for activity of both plasma membrane and soluble forms. The monomer is inactive. Heterodimer with DPP4. Interacts with PLAUR; the interaction occurs at the cell surface of invadopodia membranes. Interacts with ITGB1. Interacts with ITGA3. Associates with integrin alpha-3/beta-1; the association occurs in a collagen-dependent manner at the cell surface of invadopodia membranes. N-glycosylated. Post-translationally, the N-terminus may be blocked. Expressed in adipose tissue. Expressed in the dermal fibroblasts in the fetal skin. Expressed in the granulation tissue of healing wounds and on reactive stromal fibroblast in epithelial cancers. Expressed in activated fibroblast-like synoviocytes from inflamed synovial tissues. Expressed in activated hepatic stellate cells (HSC) and myofibroblasts from cirrhotic liver, but not detected in normal liver. Expressed in glioma cells (at protein level). Expressed in glioblastomas and glioma cells. Isoform 1 and isoform 2 are expressed in melanoma, carcinoma and fibroblast cell lines.

It is found in the cell surface. The protein resides in the cell membrane. Its subcellular location is the cell projection. The protein localises to the lamellipodium membrane. It localises to the invadopodium membrane. It is found in the ruffle membrane. The protein resides in the membrane. Its subcellular location is the secreted. The protein localises to the cytoplasm. It carries out the reaction Hydrolysis of Pro-|-Xaa &gt;&gt; Ala-|-Xaa in oligopeptides.. The enzyme catalyses Release of an N-terminal dipeptide, Xaa-Yaa-|-Zaa-, from a polypeptide, preferentially when Yaa is Pro, provided Zaa is neither Pro nor hydroxyproline.. Gelatinase activity is inhibited by serine-protease inhibitors, such as phenylmethylsulfonyl fluoride (PMSF), 4-(2-aminoethyl)-benzenesulfonyl fluoride hydrochloride (AEBSF), 4-amidino phenylsulfonyl fluoride (APSF) and diisopropyl fluorophosphate (DFP), N-ethylmaleimide (NEM) and phenylmethylsulfonyl fluoride (PMSF). Dipeptidyl peptidase activity is inhibited by 2,2'-azino-bis(3-ethylbenzthiazoline-6-sulfonic acid), diisopropylfluorophosphate (DFP). Prolyl endopeptidase activity is inhibited by the boronic acid peptide Ac-Gly-BoroPro, Ac-Gly-Pro-chloromethyl ketone and Thr-Ser-Gly-chloromethyl ketone. In terms of biological role, cell surface glycoprotein serine protease that participates in extracellular matrix degradation and involved in many cellular processes including tissue remodeling, fibrosis, wound healing, inflammation and tumor growth. Both plasma membrane and soluble forms exhibit post-proline cleaving endopeptidase activity, with a marked preference for Ala/Ser-Gly-Pro-Ser/Asn/Ala consensus sequences, on substrate such as alpha-2-antiplasmin SERPINF2 and SPRY2. Degrade also gelatin, heat-denatured type I collagen, but not native collagen type I and IV, vitronectin, tenascin, laminin, fibronectin, fibrin or casein. Also has dipeptidyl peptidase activity, exhibiting the ability to hydrolyze the prolyl bond two residues from the N-terminus of synthetic dipeptide substrates provided that the penultimate residue is proline, with a preference for Ala-Pro, Ile-Pro, Gly-Pro, Arg-Pro and Pro-Pro. Natural neuropeptide hormones for dipeptidyl peptidase are the neuropeptide Y (NPY), peptide YY (PYY), substance P (TAC1) and brain natriuretic peptide 32 (NPPB). The plasma membrane form, in association with either DPP4, PLAUR or integrins, is involved in the pericellular proteolysis of the extracellular matrix (ECM), and hence promotes cell adhesion, migration and invasion through the ECM. Plays a role in tissue remodeling during development and wound healing. Participates in the cell invasiveness towards the ECM in malignant melanoma cancers. Enhances tumor growth progression by increasing angiogenesis, collagen fiber degradation and apoptosis and by reducing antitumor response of the immune system. Promotes glioma cell invasion through the brain parenchyma by degrading the proteoglycan brevican. Acts as a tumor suppressor in melanocytic cells through regulation of cell proliferation and survival in a serine protease activity-independent manner. This is Prolyl endopeptidase FAP from Homo sapiens (Human).